We begin with the raw amino-acid sequence, 696 residues long: Elongation factor G 2 (696 aa).

The region spanning 5–281 (SKYRNIGIFA…AVVDYLPSPT (277 aa)) is the tr-type G domain. Residues 14 to 21 (AHVDAGKT), 78 to 82 (DTPGH), and 132 to 135 (NKLD) each bind GTP.

This sequence belongs to the TRAFAC class translation factor GTPase superfamily. Classic translation factor GTPase family. EF-G/EF-2 subfamily.

The protein localises to the cytoplasm. Catalyzes the GTP-dependent ribosomal translocation step during translation elongation. During this step, the ribosome changes from the pre-translocational (PRE) to the post-translocational (POST) state as the newly formed A-site-bound peptidyl-tRNA and P-site-bound deacylated tRNA move to the P and E sites, respectively. Catalyzes the coordinated movement of the two tRNA molecules, the mRNA and conformational changes in the ribosome. The sequence is that of Elongation factor G 2 from Vibrio parahaemolyticus serotype O3:K6 (strain RIMD 2210633).